Reading from the N-terminus, the 222-residue chain is Type II restriction enzyme MjaI (222 aa).

The catalysed reaction is Endonucleolytic cleavage of DNA to give specific double-stranded fragments with terminal 5'-phosphates.. Functionally, a P subtype restriction enzyme that recognizes the double-stranded sequence 5'-CTAG-3'; the cleavage site is unknown. The sequence is that of Type II restriction enzyme MjaI (mjaIR) from Methanocaldococcus jannaschii (strain ATCC 43067 / DSM 2661 / JAL-1 / JCM 10045 / NBRC 100440) (Methanococcus jannaschii).